We begin with the raw amino-acid sequence, 1470 residues long: Roundabout homolog 2 (1470 aa).

Residues 1–21 form the signal peptide; it reads MNPLMFTLLLLFGFLCIQIDG. Residues 22 to 863 lie on the Extracellular side of the membrane; it reads SRLRQEDFPP…EQITDVVKQP (842 aa). Ig-like C2-type domains are found at residues 31 to 127, 133 to 220, 225 to 309, 318 to 413, and 422 to 508; these read PRIV…ASLE, DDFR…AELT, PTFL…ATLT, PQFV…LEVT, and PIIL…AVLD. C52 and C110 are oxidised to a cystine. An N-linked (GlcNAc...) asparagine glycan is attached at N123. Disulfide bonds link C154/C203, C246/C293, and C339/C395. The N-linked (GlcNAc...) asparagine glycan is linked to N430. A disulfide bridge links C443 with C492. Fibronectin type-III domains lie at 528-622, 641-739, and 743-840; these read PPSK…TQDI, VVVR…TEEA, and PPQS…IGGR. N-linked (GlcNAc...) asparagine glycans are attached at residues N756, N786, N793, and N849. The chain crosses the membrane as a helical span at residues 864-884; that stretch reads AFIAGIGGACWVILMGFSIWL. Over 885 to 1470 the chain is Cytoplasmic; the sequence is YWRRKKRKGL…GSNSQGQFTE (586 aa). Disordered stretches follow at residues 1036 to 1089, 1129 to 1159, 1190 to 1371, and 1383 to 1470; these read GFGY…LPGT, EDRV…LTPS, IQSN…DCPA, and DWIN…QFTE. The span at 1144–1158 shows a compositional bias: polar residues; it reads PAISFGQQSTATLTP. T1157 carries the phosphothreonine modification. The residue at position 1159 (S1159) is a Phosphoserine. Residues 1194–1203 show a composition bias toward pro residues; sequence TPPPQPPAPP. Acidic residues predominate over residues 1215 to 1231; that stretch reads LETDVPDEDADDEEEPL. Over residues 1243–1288 the composition is skewed to polar residues; sequence TPGSSMDNLDSSVTGKAFSSSQRQRPTSPFSTDSNTSAAQNQSQRP. Over residues 1315-1325 the composition is skewed to pro residues; that stretch reads DLPPPPDPPPG. Residues 1328 to 1343 show a composition bias toward polar residues; sequence LRQQIGLSQHSGNVEN. The segment covering 1413 to 1437 has biased composition (low complexity); that stretch reads SKPSFPSPGGHSSSGTSSSKGSTGP. Over residues 1461-1470 the composition is skewed to polar residues; it reads GSNSQGQFTE.

It belongs to the immunoglobulin superfamily. ROBO family. In terms of assembly, interacts with SLIT2. In terms of tissue distribution, expressed in embryonal spinal cord.

It is found in the membrane. In terms of biological role, receptor for SLIT2, and probably SLIT1, which are thought to act as molecular guidance cue in cellular migration, including axonal navigation at the ventral midline of the neural tube and projection of axons to different regions during neuronal development. This chain is Roundabout homolog 2 (Robo2), found in Mus musculus (Mouse).